A 361-amino-acid polypeptide reads, in one-letter code: Queuine tRNA-ribosyltransferase (361 aa).

D92 (proton acceptor) is an active-site residue. Residues 92-96 (DSGGF), D146, Q189, and G216 each bind substrate. Residues 247–253 (GVGKPAD) form an RNA binding region. Catalysis depends on D266, which acts as the Nucleophile. The tract at residues 271 to 275 (TRSGR) is RNA binding; important for wobble base 34 recognition. The Zn(2+) site is built by C304, C306, C309, and H335.

Belongs to the queuine tRNA-ribosyltransferase family. In terms of assembly, homodimer. Within each dimer, one monomer is responsible for RNA recognition and catalysis, while the other monomer binds to the replacement base PreQ1. It depends on Zn(2+) as a cofactor.

The enzyme catalyses 7-aminomethyl-7-carbaguanine + guanosine(34) in tRNA = 7-aminomethyl-7-carbaguanosine(34) in tRNA + guanine. It participates in tRNA modification; tRNA-queuosine biosynthesis. Functionally, catalyzes the base-exchange of a guanine (G) residue with the queuine precursor 7-aminomethyl-7-deazaguanine (PreQ1) at position 34 (anticodon wobble position) in tRNAs with GU(N) anticodons (tRNA-Asp, -Asn, -His and -Tyr). Catalysis occurs through a double-displacement mechanism. The nucleophile active site attacks the C1' of nucleotide 34 to detach the guanine base from the RNA, forming a covalent enzyme-RNA intermediate. The proton acceptor active site deprotonates the incoming PreQ1, allowing a nucleophilic attack on the C1' of the ribose to form the product. After dissociation, two additional enzymatic reactions on the tRNA convert PreQ1 to queuine (Q), resulting in the hypermodified nucleoside queuosine (7-(((4,5-cis-dihydroxy-2-cyclopenten-1-yl)amino)methyl)-7-deazaguanosine). This chain is Queuine tRNA-ribosyltransferase, found in Rickettsia typhi (strain ATCC VR-144 / Wilmington).